The sequence spans 79 residues: Large ribosomal subunit protein uL24 (79 aa).

The protein belongs to the universal ribosomal protein uL24 family. As to quaternary structure, part of the 50S ribosomal subunit.

One of two assembly initiator proteins, it binds directly to the 5'-end of the 23S rRNA, where it nucleates assembly of the 50S subunit. Its function is as follows. One of the proteins that surrounds the polypeptide exit tunnel on the outside of the subunit. The protein is Large ribosomal subunit protein uL24 of Aliarcobacter butzleri (strain RM4018) (Arcobacter butzleri).